A 469-amino-acid polypeptide reads, in one-letter code: 3-isopropylmalate dehydratase large subunit (469 aa).

[4Fe-4S] cluster-binding residues include C347, C407, and C410.

It belongs to the aconitase/IPM isomerase family. LeuC type 1 subfamily. In terms of assembly, heterodimer of LeuC and LeuD. The cofactor is [4Fe-4S] cluster.

The catalysed reaction is (2R,3S)-3-isopropylmalate = (2S)-2-isopropylmalate. It participates in amino-acid biosynthesis; L-leucine biosynthesis; L-leucine from 3-methyl-2-oxobutanoate: step 2/4. Functionally, catalyzes the isomerization between 2-isopropylmalate and 3-isopropylmalate, via the formation of 2-isopropylmaleate. The chain is 3-isopropylmalate dehydratase large subunit from Photorhabdus laumondii subsp. laumondii (strain DSM 15139 / CIP 105565 / TT01) (Photorhabdus luminescens subsp. laumondii).